The chain runs to 421 residues: Synaptotagmin-15 (421 aa).

Residues 1-4 (MAEQ) lie on the Extracellular side of the membrane. Residues 5–29 (LALVIGGTIGGLLLLLLIGASCCLW) form a helical; Signal-anchor for type III membrane protein membrane-spanning segment. Residues 30-421 (RRFCATLTYE…WHALCRTTEP (392 aa)) are Cytoplasmic-facing. Residues 47–68 (MATTAASSGQRDRPCQPHARTQ) are disordered. 2 C2 domains span residues 147 to 264 (CLGR…RRVI) and 278 to 399 (EFGD…EHWD).

Belongs to the synaptotagmin family. Homodimer.

The protein localises to the cell membrane. May be involved in the trafficking and exocytosis of secretory vesicles in non-neuronal tissues. This chain is Synaptotagmin-15 (SYT15), found in Homo sapiens (Human).